Consider the following 375-residue polypeptide: Peritrophin-48 (375 aa).

A signal peptide spans 1–20 (MIIKTLLASVAIMLIATVNA). Chitin-binding type-2 domains lie at 25 to 83 (AKYC…NCIL), 86 to 143 (DNPC…SDDD), 153 to 210 (LNIC…MCER), 224 to 292 (ETLC…GCNR), and 294 to 360 (EYTT…ACQN). An intrachain disulfide couples C60 to C73. An N-linked (GlcNAc...) asparagine glycan is attached at N117. 4 cysteine pairs are disulfide-bonded: C120-C133, C187-C200, C265-C278, and C330-C343. N-linked (GlcNAc...) asparagine glycosylation occurs at N360.

In terms of processing, glycosylated. In terms of tissue distribution, cardia and midgut peritrophic membrane.

May bind chitin or related oligosaccharide structures. This is Peritrophin-48 from Lucilia cuprina (Green bottle fly).